A 205-amino-acid polypeptide reads, in one-letter code: Thymidylate kinase (205 aa).

10-17 (GTEGVGKS) contributes to the ATP binding site.

It belongs to the thymidylate kinase family.

It catalyses the reaction dTMP + ATP = dTDP + ADP. In terms of biological role, phosphorylation of dTMP to form dTDP in both de novo and salvage pathways of dTTP synthesis. The sequence is that of Thymidylate kinase from Teredinibacter turnerae (strain ATCC 39867 / T7901).